The sequence spans 43 residues: Protein PsbN (43 aa).

Residues 5-27 (TFITIFISCLLVSVTGYALYTAF) form a helical membrane-spanning segment.

Belongs to the PsbN family.

It is found in the plastid. The protein resides in the chloroplast thylakoid membrane. Functionally, may play a role in photosystem I and II biogenesis. This is Protein PsbN from Chara vulgaris (Common stonewort).